Here is a 65-residue protein sequence, read N- to C-terminus: Small, acid-soluble spore protein H 3 (65 aa).

The protein belongs to the SspH family.

Its subcellular location is the spore core. The protein is Small, acid-soluble spore protein H 3 of Geobacillus thermodenitrificans (strain NG80-2).